The sequence spans 264 residues: Acyl-[acyl-carrier-protein]--UDP-N-acetylglucosamine O-acyltransferase (264 aa).

This sequence belongs to the transferase hexapeptide repeat family. LpxA subfamily. Homotrimer.

Its subcellular location is the cytoplasm. The enzyme catalyses a (3R)-hydroxyacyl-[ACP] + UDP-N-acetyl-alpha-D-glucosamine = a UDP-3-O-[(3R)-3-hydroxyacyl]-N-acetyl-alpha-D-glucosamine + holo-[ACP]. It participates in glycolipid biosynthesis; lipid IV(A) biosynthesis; lipid IV(A) from (3R)-3-hydroxytetradecanoyl-[acyl-carrier-protein] and UDP-N-acetyl-alpha-D-glucosamine: step 1/6. In terms of biological role, involved in the biosynthesis of lipid A, a phosphorylated glycolipid that anchors the lipopolysaccharide to the outer membrane of the cell. This is Acyl-[acyl-carrier-protein]--UDP-N-acetylglucosamine O-acyltransferase from Actinobacillus pleuropneumoniae serotype 7 (strain AP76).